The chain runs to 135 residues: Large ribosomal subunit protein eL32 (135 aa).

It belongs to the eukaryotic ribosomal protein eL32 family.

The polypeptide is Large ribosomal subunit protein eL32 (rpl32e) (Methanococcus maripaludis (strain DSM 14266 / JCM 13030 / NBRC 101832 / S2 / LL)).